The following is a 282-amino-acid chain: Probable transcription factor At1g66420 (282 aa).

The interval 33 to 73 is disordered; the sequence is SKKNEEFCGGSGKVQPSEMKRRSEGTSTDMTSKRAKKVSAE.

The protein belongs to the GeBP family.

This Arabidopsis thaliana (Mouse-ear cress) protein is Probable transcription factor At1g66420.